A 208-amino-acid chain; its full sequence is V-type ATP synthase subunit D (208 aa).

It belongs to the V-ATPase D subunit family.

Its function is as follows. Produces ATP from ADP in the presence of a proton gradient across the membrane. The sequence is that of V-type ATP synthase subunit D from Chlamydia caviae (strain ATCC VR-813 / DSM 19441 / 03DC25 / GPIC) (Chlamydophila caviae).